The following is a 155-amino-acid chain: Calmodulin, flagellar (155 aa).

4 EF-hand domains span residues 14–49 (EQIA…LGQN), 50–85 (PTEA…KMKD), 87–122 (DNEE…LGEK), and 123–155 (LTDE…MMQK). The Ca(2+) site is built by Asp-27, Asp-29, Asp-31, Thr-33, Glu-38, Asp-63, Asp-65, Asn-67, Thr-69, Glu-74, Asp-100, Asp-102, Asn-104, Glu-111, Asp-136, Asp-138, Asp-140, Gln-142, and Glu-147.

Belongs to the calmodulin family.

It localises to the cell projection. It is found in the cilium. The protein resides in the flagellum. Calmodulin mediates the control of a large number of enzymes, ion channels and other proteins by Ca(2+). Among the enzymes to be stimulated by the calmodulin-Ca(2+) complex are a number of protein kinases and phosphatases. This chain is Calmodulin, flagellar (CAM1), found in Naegleria gruberi (Amoeba).